Here is a 1314-residue protein sequence, read N- to C-terminus: Phosphoribosylformylglycinamidine synthase (1314 aa).

Residues 307–318 (GAATGAGGEIRD) and Ala674 each bind ATP. 4 residues coordinate Mg(2+): Asp675, Glu714, Asn718, and Asp880. Residue Ser882 participates in ATP binding. The region spanning 1063–1314 (IAILREQGVN…LFAGARKALG (252 aa)) is the Glutamine amidotransferase type-1 domain. The active-site Nucleophile is the Cys1156. Catalysis depends on residues His1279 and Glu1281.

It in the N-terminal section; belongs to the FGAMS family. In terms of assembly, monomer.

It localises to the cytoplasm. It carries out the reaction N(2)-formyl-N(1)-(5-phospho-beta-D-ribosyl)glycinamide + L-glutamine + ATP + H2O = 2-formamido-N(1)-(5-O-phospho-beta-D-ribosyl)acetamidine + L-glutamate + ADP + phosphate + H(+). The protein operates within purine metabolism; IMP biosynthesis via de novo pathway; 5-amino-1-(5-phospho-D-ribosyl)imidazole from N(2)-formyl-N(1)-(5-phospho-D-ribosyl)glycinamide: step 1/2. In terms of biological role, phosphoribosylformylglycinamidine synthase involved in the purines biosynthetic pathway. Catalyzes the ATP-dependent conversion of formylglycinamide ribonucleotide (FGAR) and glutamine to yield formylglycinamidine ribonucleotide (FGAM) and glutamate. The sequence is that of Phosphoribosylformylglycinamidine synthase from Neisseria gonorrhoeae (strain ATCC 700825 / FA 1090).